The following is a 481-amino-acid chain: Sestrin-1 (481 aa).

The segment at 63–244 (FADAFTDLGR…ICDITNGNHG (182 aa)) is N-terminal domain; may mediate the alkylhydroperoxide reductase activity. The active-site Cysteine sulfenic acid (-SOH) intermediate is Cys122. The disordered stretch occupies residues 295-316 (KTESMVFSTEDEDPPPDIDVSR). Residues 310-481 (PDIDVSRHFE…ALRAITRYMT (172 aa)) are C-terminal domain; mediates TORC1 regulation. Residues 375-378 (TYNT), Thr387, and Glu452 each bind L-leucine.

It belongs to the sestrin family.

It is found in the nucleus. The protein resides in the cytoplasm. It catalyses the reaction a hydroperoxide + L-cysteinyl-[protein] = S-hydroxy-L-cysteinyl-[protein] + an alcohol. Functionally, may function as an intracellular leucine sensor that negatively regulates the TORC1 signaling pathway through the GATOR complex. In absence of leucine, binds the GATOR subcomplex GATOR2 and prevents TORC1 signaling. Binding of leucine to SESN2 disrupts its interaction with GATOR2 thereby activating the TORC1 signaling pathway. This stress-inducible metabolic regulator may also play a role in protection against oxidative and genotoxic stresses. May prevent the accumulation of reactive oxygen species (ROS) through the alkylhydroperoxide reductase activity born by the N-terminal domain of the protein. The polypeptide is Sestrin-1 (Xenopus laevis (African clawed frog)).